A 338-amino-acid chain; its full sequence is Eukaryotic translation initiation factor 3 subunit H (338 aa).

In terms of domain architecture, MPN spans 22-154 (VQCDGLAVMK…LKAYRLTPQA (133 aa)).

The protein belongs to the eIF-3 subunit H family. In terms of assembly, component of the eukaryotic translation initiation factor 3 (eIF-3) complex. The eIF-3 complex interacts with pix. Interacts with mxt.

The protein localises to the cytoplasm. Functionally, component of the eukaryotic translation initiation factor 3 (eIF-3) complex, which is involved in protein synthesis of a specialized repertoire of mRNAs and, together with other initiation factors, stimulates binding of mRNA and methionyl-tRNAi to the 40S ribosome. The eIF-3 complex specifically targets and initiates translation of a subset of mRNAs involved in cell proliferation. The protein is Eukaryotic translation initiation factor 3 subunit H of Drosophila yakuba (Fruit fly).